The following is a 93-amino-acid chain: UPF0473 protein CHY_0543 (93 aa).

This sequence belongs to the UPF0473 family.

This is UPF0473 protein CHY_0543 from Carboxydothermus hydrogenoformans (strain ATCC BAA-161 / DSM 6008 / Z-2901).